Consider the following 70-residue polypeptide: Sec-independent protein translocase protein TatA (70 aa).

A helical membrane pass occupies residues 1–21 (MFGLGGQELLLILLIILLLFG). Residues 47–70 (EDEFNKAMSDPPEKKEKESPSDKG) form a disordered region. Over residues 57-70 (PPEKKEKESPSDKG) the composition is skewed to basic and acidic residues.

This sequence belongs to the TatA/E family. Forms a complex with TatC.

Its subcellular location is the cell inner membrane. In terms of biological role, part of the twin-arginine translocation (Tat) system that transports large folded proteins containing a characteristic twin-arginine motif in their signal peptide across membranes. TatA could form the protein-conducting channel of the Tat system. This chain is Sec-independent protein translocase protein TatA, found in Prosthecochloris aestuarii (strain DSM 271 / SK 413).